The sequence spans 96 residues: ATP-dependent Clp protease adapter protein ClpS (96 aa).

Belongs to the ClpS family. In terms of assembly, binds to the N-terminal domain of the chaperone ClpA.

In terms of biological role, involved in the modulation of the specificity of the ClpAP-mediated ATP-dependent protein degradation. This chain is ATP-dependent Clp protease adapter protein ClpS, found in Campylobacter jejuni subsp. doylei (strain ATCC BAA-1458 / RM4099 / 269.97).